Consider the following 165-residue polypeptide: Xanthine-guanine phosphoribosyltransferase (165 aa).

5-phospho-alpha-D-ribose 1-diphosphate is bound by residues 41-42 (RG) and 98-106 (DDLTDTGKT). D99 is a Mg(2+) binding site. Guanine-binding residues include D102 and I145. Xanthine-binding residues include D102 and I145. GMP is bound by residues 102-106 (DTGKT) and 144-145 (WI).

Belongs to the purine/pyrimidine phosphoribosyltransferase family. XGPT subfamily. Homotetramer. Requires Mg(2+) as cofactor.

The protein resides in the cell inner membrane. It carries out the reaction GMP + diphosphate = guanine + 5-phospho-alpha-D-ribose 1-diphosphate. It catalyses the reaction XMP + diphosphate = xanthine + 5-phospho-alpha-D-ribose 1-diphosphate. The enzyme catalyses IMP + diphosphate = hypoxanthine + 5-phospho-alpha-D-ribose 1-diphosphate. The protein operates within purine metabolism; GMP biosynthesis via salvage pathway; GMP from guanine: step 1/1. It participates in purine metabolism; XMP biosynthesis via salvage pathway; XMP from xanthine: step 1/1. In terms of biological role, purine salvage pathway enzyme that catalyzes the transfer of the ribosyl-5-phosphate group from 5-phospho-alpha-D-ribose 1-diphosphate (PRPP) to the N9 position of the 6-oxopurines guanine and xanthine to form the corresponding ribonucleotides GMP (guanosine 5'-monophosphate) and XMP (xanthosine 5'-monophosphate), with the release of PPi. To a lesser extent, also acts on hypoxanthine. The sequence is that of Xanthine-guanine phosphoribosyltransferase from Brucella anthropi (strain ATCC 49188 / DSM 6882 / CCUG 24695 / JCM 21032 / LMG 3331 / NBRC 15819 / NCTC 12168 / Alc 37) (Ochrobactrum anthropi).